The sequence spans 907 residues: Schlafen family member 13 (907 aa).

Residues 1–353 (MEIHPSLVVE…WVRMMVDIGP (353 aa)) are n'-domain region. Residues Glu205 and Glu210 contribute to the active site. Zn(2+) is bound by residues His281, Cys283, and Cys318. 604 to 611 (GMPGSGKT) contributes to the ATP binding site.

It belongs to the Schlafen family. Subgroup III subfamily. Requires Mg(2+) as cofactor.

It is found in the cytoplasm. Functionally, endoribonuclease that cleaves tRNAs and rRNAs. Cleaves tRNAs 11 nucleotides from the 3'-terminus at the acceptor stem. Does not act on tRNA(Sec). This chain is Schlafen family member 13, found in Rattus norvegicus (Rat).